The sequence spans 252 residues: Triosephosphate isomerase (252 aa).

10-12 provides a ligand contact to substrate; sequence NWK. The active-site Electrophile is the His-96. The Proton acceptor role is filled by Glu-168. Substrate contacts are provided by residues Gly-174, Ser-214, and 235-236; that span reads GG.

This sequence belongs to the triosephosphate isomerase family. As to quaternary structure, homodimer.

Its subcellular location is the cytoplasm. It carries out the reaction D-glyceraldehyde 3-phosphate = dihydroxyacetone phosphate. It functions in the pathway carbohydrate biosynthesis; gluconeogenesis. It participates in carbohydrate degradation; glycolysis; D-glyceraldehyde 3-phosphate from glycerone phosphate: step 1/1. In terms of biological role, involved in the gluconeogenesis. Catalyzes stereospecifically the conversion of dihydroxyacetone phosphate (DHAP) to D-glyceraldehyde-3-phosphate (G3P). The polypeptide is Triosephosphate isomerase (Streptococcus thermophilus (strain CNRZ 1066)).